The following is a 429-amino-acid chain: MATGKSGGSSAEDLGHHAGYYRLPNTHDARLFYFFFESRGSKGEDDPVVIWLTGGPGCSSELALFYENGPFHIADNMSLVWNDFGWDQESNLIYVDQPTGTGFSYSSNPRDTRHDEAGVSNDLYAFLQAFFTEHPNFAKNDFYITGESYAGHYIPAFASRVYKGNKNSEGIHINLKGFAIGNGLTDPAIQYKAYTDYSLDMGLITKSQFNRINKIVPTCELAIKLCGTSGTISCLGAYVVCNLIFSSIETIIGKKNYYDIRKPCVGSLCYDLSNMEKFLQLKSVRESLGVGDIQFVSCSPTVYQAMLLDWMRNLEVGIPELLENDIKVLIYAGEYDLICNWLGNSRWVNSMEWSGKEAFVSSSEEPFTVDGKEAGILKSYGPLSFLKVHDAGHMVPMDQPKVALEMLMRWTSGNLSNASSSFQRLDFTM.

3 cysteine pairs are disulfide-bonded: Cys58–Cys298, Cys226–Cys241, and Cys264–Cys269. Asn76 is a glycosylation site (N-linked (GlcNAc...) asparagine). Ser148 is a catalytic residue. Asp336 is a catalytic residue. Residue Cys339 participates in substrate binding. His393 is a catalytic residue. N-linked (GlcNAc...) asparagine glycosylation is found at Asn414 and Asn417.

This sequence belongs to the peptidase S10 family. As to expression, abundant in germinated embryos composed of leaf, root, and scutellum.

This chain is Serine carboxypeptidase-like (CBP31), found in Oryza sativa subsp. japonica (Rice).